The chain runs to 242 residues: Probable transcriptional regulatory protein Cthe_2075 (242 aa).

Belongs to the TACO1 family.

It localises to the cytoplasm. In Acetivibrio thermocellus (strain ATCC 27405 / DSM 1237 / JCM 9322 / NBRC 103400 / NCIMB 10682 / NRRL B-4536 / VPI 7372) (Clostridium thermocellum), this protein is Probable transcriptional regulatory protein Cthe_2075.